Reading from the N-terminus, the 254-residue chain is Probable phosphatase Shew185_1467 (254 aa).

Residues H8, H10, H16, H41, E74, H102, H132, D193, and H195 each coordinate Zn(2+).

It belongs to the PHP family. The cofactor is Zn(2+).

The protein is Probable phosphatase Shew185_1467 of Shewanella baltica (strain OS185).